A 186-amino-acid polypeptide reads, in one-letter code: dCTP deaminase (186 aa).

Residue 107–112 (KSTYAR) participates in dCTP binding. The Proton donor/acceptor role is filled by E133. The dCTP site is built by Q152, Y166, and Q176.

It belongs to the dCTP deaminase family. As to quaternary structure, homotrimer.

It catalyses the reaction dCTP + H2O + H(+) = dUTP + NH4(+). It participates in pyrimidine metabolism; dUMP biosynthesis; dUMP from dCTP (dUTP route): step 1/2. Its function is as follows. Catalyzes the deamination of dCTP to dUTP. The sequence is that of dCTP deaminase from Campylobacter curvus (strain 525.92).